Here is a 163-residue protein sequence, read N- to C-terminus: Olfactory marker protein (163 aa).

Alanine 2 carries the N-acetylalanine modification.

The protein belongs to the olfactory marker protein family. Interacts with BEX1 and BEX2. In terms of tissue distribution, uniquely associated with mature olfactory receptor neurons.

Its subcellular location is the cytoplasm. Its function is as follows. May act as a modulator of the olfactory signal-transduction cascade. The sequence is that of Olfactory marker protein (Omp) from Mus musculus (Mouse).